A 74-amino-acid polypeptide reads, in one-letter code: uncharacterized protein (74 aa).

The dksA C4-type zinc-finger motif lies at 35-59 (CEECDAPIPAARRAAYPSATRCVSC).

This is an uncharacterized protein from Enterobacteriaceae (Bacteriophage P2).